The sequence spans 183 residues: Threonylcarbamoyl-AMP synthase (183 aa).

In terms of domain architecture, YrdC-like spans 1–183; sequence MELAQIVERL…IFSRQIFRRG (183 aa).

This sequence belongs to the SUA5 family. TsaC subfamily.

The protein resides in the cytoplasm. It catalyses the reaction L-threonine + hydrogencarbonate + ATP = L-threonylcarbamoyladenylate + diphosphate + H2O. Functionally, required for the formation of a threonylcarbamoyl group on adenosine at position 37 (t(6)A37) in tRNAs that read codons beginning with adenine. Catalyzes the conversion of L-threonine, HCO(3)(-)/CO(2) and ATP to give threonylcarbamoyl-AMP (TC-AMP) as the acyladenylate intermediate, with the release of diphosphate. The protein is Threonylcarbamoyl-AMP synthase of Mannheimia succiniciproducens (strain KCTC 0769BP / MBEL55E).